The chain runs to 295 residues: Aquaporin-9 (295 aa).

The Cytoplasmic segment spans residues 1–24 (MQPEGAEKGKSFKQRLVLKSSLAK). A helical membrane pass occupies residues 25–43 (ETLSEFLGTFILIVLGCGC). Residues 44 to 57 (VAQAILSRGRFGGV) lie on the Extracellular side of the membrane. The chain crosses the membrane as a helical span at residues 58 to 77 (ITINVGFSMAVAMAIYVAGG). The Cytoplasmic segment spans residues 78–79 (VS). Positions 80–92 (GGHINPAVSLAMC) form an intramembrane region, discontinuously helical. The NPA 1 motif lies at 84–86 (NPA). Residues 93 to 98 (LFGRMK) are Cytoplasmic-facing. A helical membrane pass occupies residues 99 to 123 (WFKLPFYVGAQFLGAFVGAATVFGI). The Extracellular portion of the chain corresponds to 124-160 (YYDGLMSFAGGKLLIVGENATAHIFATYPAPYLSLAN). Residues 161-178 (AFADQVVATMILLIIVFA) form a helical membrane-spanning segment. At 179–190 (IFDSRNLGAPRG) the chain is on the cytoplasmic side. A helical membrane pass occupies residues 191-207 (LEPIAIGLLIIVIASSL). Over 208 to 210 (GLN) the chain is Extracellular. Positions 211 to 225 (SGCAMNPARDLSPRL) form an intramembrane region, discontinuously helical. An NPA 2 motif is present at residues 216 to 218 (NPA). The Extracellular portion of the chain corresponds to 226-243 (FTALAGWGFEVFRAGNNF). A helical transmembrane segment spans residues 244 to 264 (WWIPVVGPLVGAVIGGLIYVL). At 265–295 (VIEIHHPEPDSVFKTEQSEDKPEKYELSVIM) the chain is on the cytoplasmic side.

It belongs to the MIP/aquaporin (TC 1.A.8) family. In terms of assembly, homotetramer; each monomer provides an independent glycerol/water pore. In terms of tissue distribution, highly expressed in peripheral leukocytes. Also expressed in liver, lung, and spleen.

It is found in the cell membrane. Its subcellular location is the basolateral cell membrane. The enzyme catalyses glycerol(in) = glycerol(out). It catalyses the reaction H2O(in) = H2O(out). It carries out the reaction urea(in) = urea(out). The catalysed reaction is (S)-lactate(in) = (S)-lactate(out). The enzyme catalyses NH4(+)(in) = NH4(+)(out). It catalyses the reaction uracil(in) = uracil(out). It carries out the reaction adenine(out) = adenine(in). The catalysed reaction is 3-hydroxybutanoate(in) = 3-hydroxybutanoate(out). The enzyme catalyses D-sorbitol(in) = D-sorbitol(out). It catalyses the reaction D-mannitol(in) = D-mannitol(out). It carries out the reaction H2O2(out) = H2O2(in). The catalysed reaction is arsenite(in) = arsenite(out). The enzyme catalyses selenite(in) = selenite(out). Aquaglyceroporins form homotetrameric transmembrane channels, with each monomer independently mediating glycerol and water transport across the plasma membrane along their osmotic gradient. AQP9 is the primary route for glycerol uptake in hepatocytes, supporting hepatic gluconeogenesis. It exhibits broad specificity and may transport various small, non-charged solutes, including carbamides, polyols, purines, and pyrimidines. AQP9 may also facilitate hepatic urea extrusion. Due to its permeability to lactate, AQP9 might participate in the astrocyte-to-neuron lactate shuttle, supplying neurons with energy. Additionally, AQP9 is permeable to arsenite, contributing to arsenic excretion by the liver and providing partial protection against arsenic toxicity. It is also permeable to H2O2 in vivo. Could also be permeable to ammonium. This chain is Aquaporin-9, found in Homo sapiens (Human).